Here is a 264-residue protein sequence, read N- to C-terminus: Thiazole synthase (264 aa).

The active-site Schiff-base intermediate with DXP is K106. Residues G167, 193–194 (AG), and 215–216 (NS) contribute to the 1-deoxy-D-xylulose 5-phosphate site.

Belongs to the ThiG family. As to quaternary structure, homotetramer. Forms heterodimers with either ThiH or ThiS.

The protein localises to the cytoplasm. It catalyses the reaction [ThiS sulfur-carrier protein]-C-terminal-Gly-aminoethanethioate + 2-iminoacetate + 1-deoxy-D-xylulose 5-phosphate = [ThiS sulfur-carrier protein]-C-terminal Gly-Gly + 2-[(2R,5Z)-2-carboxy-4-methylthiazol-5(2H)-ylidene]ethyl phosphate + 2 H2O + H(+). It participates in cofactor biosynthesis; thiamine diphosphate biosynthesis. Its function is as follows. Catalyzes the rearrangement of 1-deoxy-D-xylulose 5-phosphate (DXP) to produce the thiazole phosphate moiety of thiamine. Sulfur is provided by the thiocarboxylate moiety of the carrier protein ThiS. In vitro, sulfur can be provided by H(2)S. The protein is Thiazole synthase of Prochlorococcus marinus (strain MIT 9301).